The primary structure comprises 451 residues: Phosphoglucosamine mutase (451 aa).

S104 (phosphoserine intermediate) is an active-site residue. 4 residues coordinate Mg(2+): S104, D242, D244, and D246. S104 is subject to Phosphoserine.

The protein belongs to the phosphohexose mutase family. Mg(2+) is required as a cofactor. Post-translationally, activated by phosphorylation.

The enzyme catalyses alpha-D-glucosamine 1-phosphate = D-glucosamine 6-phosphate. Functionally, catalyzes the conversion of glucosamine-6-phosphate to glucosamine-1-phosphate. This Kocuria rhizophila (strain ATCC 9341 / DSM 348 / NBRC 103217 / DC2201) protein is Phosphoglucosamine mutase.